Here is a 249-residue protein sequence, read N- to C-terminus: 2-C-methyl-D-erythritol 4-phosphate cytidylyltransferase (249 aa).

This sequence belongs to the IspD/TarI cytidylyltransferase family. IspD subfamily.

The enzyme catalyses 2-C-methyl-D-erythritol 4-phosphate + CTP + H(+) = 4-CDP-2-C-methyl-D-erythritol + diphosphate. It functions in the pathway isoprenoid biosynthesis; isopentenyl diphosphate biosynthesis via DXP pathway; isopentenyl diphosphate from 1-deoxy-D-xylulose 5-phosphate: step 2/6. Functionally, catalyzes the formation of 4-diphosphocytidyl-2-C-methyl-D-erythritol from CTP and 2-C-methyl-D-erythritol 4-phosphate (MEP). The chain is 2-C-methyl-D-erythritol 4-phosphate cytidylyltransferase from Shewanella oneidensis (strain ATCC 700550 / JCM 31522 / CIP 106686 / LMG 19005 / NCIMB 14063 / MR-1).